A 239-amino-acid polypeptide reads, in one-letter code: Ribonuclease HII (239 aa).

One can recognise an RNase H type-2 domain in the interval 30–221 (GPVAGVDEVG…VRRLVTAGTP (192 aa)). Residues Asp36, Glu37, and Asp130 each coordinate a divalent metal cation.

Belongs to the RNase HII family. Mn(2+) is required as a cofactor. Requires Mg(2+) as cofactor.

The protein localises to the cytoplasm. It carries out the reaction Endonucleolytic cleavage to 5'-phosphomonoester.. Functionally, endonuclease that specifically degrades the RNA of RNA-DNA hybrids. In Mycobacterium sp. (strain KMS), this protein is Ribonuclease HII.